A 62-amino-acid chain; its full sequence is Large ribosomal subunit protein bL28 (62 aa).

Residues 1-24 (MARKCVITGRKTKAGNNRSHAMNS) are disordered. Residues 14 to 24 (AGNNRSHAMNS) are compositionally biased toward polar residues.

The protein belongs to the bacterial ribosomal protein bL28 family.

The polypeptide is Large ribosomal subunit protein bL28 (Bacillus pumilus (strain SAFR-032)).